We begin with the raw amino-acid sequence, 56 residues long: Small ribosomal subunit protein uS14 (56 aa).

The Zn(2+) site is built by Cys21, Cys24, Cys39, and Cys42.

The protein belongs to the universal ribosomal protein uS14 family. Component of the 40S small ribosomal subunit. Requires Zn(2+) as cofactor.

The protein resides in the cytoplasm. Its subcellular location is the cytosol. It localises to the rough endoplasmic reticulum. This chain is Small ribosomal subunit protein uS14 (RpS29), found in Ixodes scapularis (Black-legged tick).